The primary structure comprises 434 residues: GTPase Obg (434 aa).

One can recognise an Obg domain in the interval 2–160 (PTFVDQTKIE…RVLRLELKLL (159 aa)). In terms of domain architecture, OBG-type G spans 161–334 (ADVGLVGFPS…LMNDTATLVE (174 aa)). GTP-binding positions include 167–174 (GFPSVGKS), 192–196 (FTTLT), 214–217 (DLPG), 284–287 (SQMD), and 315–317 (SSV). Mg(2+) is bound by residues Ser-174 and Thr-194. The OCT domain occupies 356–434 (YKAPQKNEFT…IGKFVFEFVQ (79 aa)).

Belongs to the TRAFAC class OBG-HflX-like GTPase superfamily. OBG GTPase family. In terms of assembly, monomer. Requires Mg(2+) as cofactor.

The protein localises to the cytoplasm. An essential GTPase which binds GTP, GDP and possibly (p)ppGpp with moderate affinity, with high nucleotide exchange rates and a fairly low GTP hydrolysis rate. Plays a role in control of the cell cycle, stress response, ribosome biogenesis and in those bacteria that undergo differentiation, in morphogenesis control. The chain is GTPase Obg from Lactobacillus helveticus (strain DPC 4571).